The following is a 1190-amino-acid chain: DNA-directed RNA polymerase subunit beta (1190 aa).

The protein belongs to the RNA polymerase beta chain family. The RNAP catalytic core consists of 2 alpha, 1 beta, 1 beta' and 1 omega subunit. When a sigma factor is associated with the core the holoenzyme is formed, which can initiate transcription.

The enzyme catalyses RNA(n) + a ribonucleoside 5'-triphosphate = RNA(n+1) + diphosphate. In terms of biological role, DNA-dependent RNA polymerase catalyzes the transcription of DNA into RNA using the four ribonucleoside triphosphates as substrates. This is DNA-directed RNA polymerase subunit beta from Streptococcus suis (strain 98HAH33).